Reading from the N-terminus, the 251-residue chain is Probable transcriptional regulatory protein MLBr00475 (251 aa).

The protein belongs to the TACO1 family.

The protein resides in the cytoplasm. This chain is Probable transcriptional regulatory protein MLBr00475, found in Mycobacterium leprae (strain Br4923).